Consider the following 436-residue polypeptide: Glutamyl-tRNA reductase (436 aa).

Residues 52 to 55 (TCHR), Ser105, 110 to 112 (EDQ), and Gln116 each bind substrate. Cys53 acts as the Nucleophile in catalysis. Position 184–189 (184–189 (GAGEMG)) interacts with NADP(+).

This sequence belongs to the glutamyl-tRNA reductase family. As to quaternary structure, homodimer.

It carries out the reaction (S)-4-amino-5-oxopentanoate + tRNA(Glu) + NADP(+) = L-glutamyl-tRNA(Glu) + NADPH + H(+). It functions in the pathway porphyrin-containing compound metabolism; protoporphyrin-IX biosynthesis; 5-aminolevulinate from L-glutamyl-tRNA(Glu): step 1/2. Catalyzes the NADPH-dependent reduction of glutamyl-tRNA(Glu) to glutamate 1-semialdehyde (GSA). This is Glutamyl-tRNA reductase from Halobacterium salinarum (strain ATCC 29341 / DSM 671 / R1).